A 465-amino-acid polypeptide reads, in one-letter code: Cysteine--tRNA ligase (465 aa).

Cys29 provides a ligand contact to Zn(2+). The short motif at 31 to 41 (PTVYNYIHIGN) is the 'HIGH' region element. Residues Cys209, His234, and Glu238 each coordinate Zn(2+). A 'KMSKS' region motif is present at residues 266–270 (KMSKS). Lys269 is a binding site for ATP. Ser270 carries the phosphoserine modification.

This sequence belongs to the class-I aminoacyl-tRNA synthetase family. Monomer. Zn(2+) is required as a cofactor.

It is found in the cytoplasm. The catalysed reaction is tRNA(Cys) + L-cysteine + ATP = L-cysteinyl-tRNA(Cys) + AMP + diphosphate. The sequence is that of Cysteine--tRNA ligase from Bacillus anthracis (strain A0248).